The sequence spans 230 residues: 5'-methylthioadenosine/S-adenosylhomocysteine nucleosidase (230 aa).

Residue E12 is the Proton acceptor of the active site. Residues G78, M153, and 174-175 contribute to the substrate site; that span reads ME. Residue D198 is the Proton donor of the active site.

This sequence belongs to the PNP/UDP phosphorylase family. MtnN subfamily.

It catalyses the reaction S-adenosyl-L-homocysteine + H2O = S-(5-deoxy-D-ribos-5-yl)-L-homocysteine + adenine. The catalysed reaction is S-methyl-5'-thioadenosine + H2O = 5-(methylsulfanyl)-D-ribose + adenine. It carries out the reaction 5'-deoxyadenosine + H2O = 5-deoxy-D-ribose + adenine. Its pathway is amino-acid biosynthesis; L-methionine biosynthesis via salvage pathway; S-methyl-5-thio-alpha-D-ribose 1-phosphate from S-methyl-5'-thioadenosine (hydrolase route): step 1/2. Functionally, catalyzes the irreversible cleavage of the glycosidic bond in both 5'-methylthioadenosine (MTA) and S-adenosylhomocysteine (SAH/AdoHcy) to adenine and the corresponding thioribose, 5'-methylthioribose and S-ribosylhomocysteine, respectively. Also cleaves 5'-deoxyadenosine, a toxic by-product of radical S-adenosylmethionine (SAM) enzymes, into 5-deoxyribose and adenine. This Aeromonas salmonicida (strain A449) protein is 5'-methylthioadenosine/S-adenosylhomocysteine nucleosidase.